The primary structure comprises 268 residues: UPF0294 protein ETA_26410 (268 aa).

This sequence belongs to the UPF0294 family.

The protein localises to the cytoplasm. The protein is UPF0294 protein ETA_26410 of Erwinia tasmaniensis (strain DSM 17950 / CFBP 7177 / CIP 109463 / NCPPB 4357 / Et1/99).